The following is a 90-amino-acid chain: MTQYRRVAIKNRLGMHARPAMKLFDLVNTFQSTVTLRNHEGVEAQADSVIAMLMLDSEQGSHIDIEASGCDEKEAIDAIIALFESGFDED.

Residues 2 to 90 enclose the HPr domain; the sequence is TQYRRVAIKN…ALFESGFDED (89 aa). His-16 (pros-phosphohistidine intermediate) is an active-site residue.

It belongs to the HPr family.

It localises to the cytoplasm. In terms of biological role, component of the phosphoenolpyruvate-dependent nitrogen-metabolic phosphotransferase system (nitrogen-metabolic PTS), that seems to be involved in regulating nitrogen metabolism. The phosphoryl group from phosphoenolpyruvate (PEP) is transferred to the phosphoryl carrier protein NPr by enzyme I-Ntr. Phospho-NPr then transfers it to EIIA-Ntr. Could function in the transcriptional regulation of sigma-54 dependent operons in conjunction with the NPr (PtsO) and EIIA-Ntr (PtsN) proteins. The sequence is that of Phosphocarrier protein NPr (ptsO) from Proteus mirabilis (strain HI4320).